The sequence spans 600 residues: NADH-quinone oxidoreductase subunit C/D (600 aa).

The tract at residues M1–Q190 is NADH dehydrogenase I subunit C. Residues D214–R600 are NADH dehydrogenase I subunit D.

This sequence in the N-terminal section; belongs to the complex I 30 kDa subunit family. The protein in the C-terminal section; belongs to the complex I 49 kDa subunit family. As to quaternary structure, NDH-1 is composed of 13 different subunits. Subunits NuoB, CD, E, F, and G constitute the peripheral sector of the complex.

The protein localises to the cell inner membrane. The enzyme catalyses a quinone + NADH + 5 H(+)(in) = a quinol + NAD(+) + 4 H(+)(out). NDH-1 shuttles electrons from NADH, via FMN and iron-sulfur (Fe-S) centers, to quinones in the respiratory chain. The immediate electron acceptor for the enzyme in this species is believed to be ubiquinone. Couples the redox reaction to proton translocation (for every two electrons transferred, four hydrogen ions are translocated across the cytoplasmic membrane), and thus conserves the redox energy in a proton gradient. This chain is NADH-quinone oxidoreductase subunit C/D, found in Shigella boydii serotype 18 (strain CDC 3083-94 / BS512).